A 334-amino-acid chain; its full sequence is Serine/threonine-protein kinase SAPK3 (334 aa).

Residues 5–261 enclose the Protein kinase domain; sequence YEALKELGAG…IPEIKKHTWF (257 aa). Residues 11–19 and Lys34 each bind ATP; that span reads LGAGNFGVA. The Proton acceptor role is filled by Asp124.

The protein belongs to the protein kinase superfamily. Ser/Thr protein kinase family. In terms of processing, autophosphorylated in presence of Ca(2+). In terms of tissue distribution, expressed in leaves and maturing seeds, but not in roots and stems of field-grown plants.

The protein resides in the cytoplasm. It localises to the nucleus. It carries out the reaction L-seryl-[protein] + ATP = O-phospho-L-seryl-[protein] + ADP + H(+). The enzyme catalyses L-threonyl-[protein] + ATP = O-phospho-L-threonyl-[protein] + ADP + H(+). Activated by phosphorylation. May play a role in signal transduction of hyperosmotic response. This Oryza sativa subsp. indica (Rice) protein is Serine/threonine-protein kinase SAPK3 (SAPK3).